The chain runs to 166 residues: Twist-related protein (166 aa).

Residues 1–18 (MMQEESSSPVSPVDSLSN) are compositionally biased toward low complexity. A disordered region spans residues 1-83 (MMQEESSSPV…RVMANVRERQ (83 aa)). Residues 28–39 (SKRGCRKRRSAR) are compositionally biased toward basic residues. Residues 57 to 75 (ASSTGSSPQSFEELQSQRV) are compositionally biased toward polar residues. A bHLH domain is found at 72–123 (SQRVMANVRERQRTQSLNEAFSSLRKIIPTLPSDKLSKIQTLKLASRYIDFL).

Efficient DNA binding requires dimerization with another bHLH protein. Homodimer. Subset of mesodermal cells.

It localises to the nucleus. Functionally, probable transcription factor, which may be involved, with other proteins, in establishing the pattern of cell type-specific gene expression in mesodermal cell subgroups. This is Twist-related protein (twist1) from Xenopus laevis (African clawed frog).